Consider the following 358-residue polypeptide: uncharacterized protein (358 aa).

Residues 70–88 (RPAATAGTTPATGASGSAR) show a composition bias toward low complexity. Positions 70-93 (RPAATAGTTPATGASGSARPTDAA) are disordered. Residues 178–353 (PSTCRGDNVS…AFSAAIQAGE (176 aa)) form the Macro domain.

This is an uncharacterized protein from Mycobacterium bovis (strain ATCC BAA-935 / AF2122/97).